Here is an 881-residue protein sequence, read N- to C-terminus: Putative leucine-rich repeat receptor-like protein kinase At2g19210 (881 aa).

An N-terminal signal peptide occupies residues 1–25 (MVHYNFLSLIIFACFFAVFVLLVRA). The Extracellular segment spans residues 26–518 (QDQSGFVSID…SDEKTKKNVY (493 aa)). N-linked (GlcNAc...) asparagine glycans are attached at residues Asn-143, Asn-234, Asn-295, Asn-310, Asn-404, Asn-419, Asn-435, Asn-446, and Asn-462. LRR repeat units lie at residues 438–460 (LLHI…LGNL) and 462–483 (NLTE…KLLE). A helical membrane pass occupies residues 519-539 (IIPLVASVVGVLGLVLAIALF). The Cytoplasmic portion of the chain corresponds to 540 to 881 (LLYKKRHRRG…FDSGMFPQAR (342 aa)). Residues 576–850 (NNFERVLGQG…HVVAELKESV (275 aa)) enclose the Protein kinase domain. ATP is bound by residues 582–590 (LGQGGFGKV) and Lys-603. Tyr-648 carries the post-translational modification Phosphotyrosine. Asp-699 functions as the Proton acceptor in the catalytic mechanism. 2 positions are modified to phosphothreonine: Thr-734 and Thr-739. Tyr-747 carries the post-translational modification Phosphotyrosine. The segment at 851–881 (SRARAGGGSGASSVTDPAMTNFDSGMFPQAR) is disordered.

Belongs to the protein kinase superfamily. Ser/Thr protein kinase family.

It localises to the cell membrane. The catalysed reaction is L-seryl-[protein] + ATP = O-phospho-L-seryl-[protein] + ADP + H(+). It carries out the reaction L-threonyl-[protein] + ATP = O-phospho-L-threonyl-[protein] + ADP + H(+). The protein is Putative leucine-rich repeat receptor-like protein kinase At2g19210 of Arabidopsis thaliana (Mouse-ear cress).